The chain runs to 191 residues: 3-isopropylmalate dehydratase small subunit (191 aa).

Belongs to the LeuD family. LeuD type 1 subfamily. As to quaternary structure, heterodimer of LeuC and LeuD.

It catalyses the reaction (2R,3S)-3-isopropylmalate = (2S)-2-isopropylmalate. It functions in the pathway amino-acid biosynthesis; L-leucine biosynthesis; L-leucine from 3-methyl-2-oxobutanoate: step 2/4. Functionally, catalyzes the isomerization between 2-isopropylmalate and 3-isopropylmalate, via the formation of 2-isopropylmaleate. This is 3-isopropylmalate dehydratase small subunit from Staphylococcus saprophyticus subsp. saprophyticus (strain ATCC 15305 / DSM 20229 / NCIMB 8711 / NCTC 7292 / S-41).